The sequence spans 232 residues: Phosphoribosylformylglycinamidine synthase subunit PurQ (232 aa).

A Glutamine amidotransferase type-1 domain is found at 2–232 (KIAIIQFGGT…SMADYITENF (231 aa)). Residue C86 is the Nucleophile of the active site. Active-site residues include H203 and E205.

In terms of assembly, part of the FGAM synthase complex composed of 1 PurL, 1 PurQ and 2 PurS subunits.

It localises to the cytoplasm. The enzyme catalyses N(2)-formyl-N(1)-(5-phospho-beta-D-ribosyl)glycinamide + L-glutamine + ATP + H2O = 2-formamido-N(1)-(5-O-phospho-beta-D-ribosyl)acetamidine + L-glutamate + ADP + phosphate + H(+). The catalysed reaction is L-glutamine + H2O = L-glutamate + NH4(+). The protein operates within purine metabolism; IMP biosynthesis via de novo pathway; 5-amino-1-(5-phospho-D-ribosyl)imidazole from N(2)-formyl-N(1)-(5-phospho-D-ribosyl)glycinamide: step 1/2. Part of the phosphoribosylformylglycinamidine synthase complex involved in the purines biosynthetic pathway. Catalyzes the ATP-dependent conversion of formylglycinamide ribonucleotide (FGAR) and glutamine to yield formylglycinamidine ribonucleotide (FGAM) and glutamate. The FGAM synthase complex is composed of three subunits. PurQ produces an ammonia molecule by converting glutamine to glutamate. PurL transfers the ammonia molecule to FGAR to form FGAM in an ATP-dependent manner. PurS interacts with PurQ and PurL and is thought to assist in the transfer of the ammonia molecule from PurQ to PurL. This Methanosarcina mazei (strain ATCC BAA-159 / DSM 3647 / Goe1 / Go1 / JCM 11833 / OCM 88) (Methanosarcina frisia) protein is Phosphoribosylformylglycinamidine synthase subunit PurQ.